The primary structure comprises 433 residues: Mitochondrial distribution and morphology protein 12 (433 aa).

The SMP-LTD domain maps to methionine 1–isoleucine 433. Disordered stretches follow at residues leucine 62–methionine 113, threonine 180–glutamate 279, and glycine 356–arginine 376. A compositionally biased stretch (basic and acidic residues) spans serine 81 to asparagine 96. Positions serine 214–valine 236 are enriched in polar residues. Basic and acidic residues predominate over residues proline 268–glutamate 279.

It belongs to the MDM12 family. In terms of assembly, component of the ER-mitochondria encounter structure (ERMES) or MDM complex, composed of MMM1, MDM10, MDM12 and MDM34. An MMM1 homodimer associates with one molecule of MDM12 on each side in a pairwise head-to-tail manner, and the SMP-LTD domains of MMM1 and MDM12 generate a continuous hydrophobic tunnel for phospholipid trafficking.

The protein localises to the mitochondrion outer membrane. The protein resides in the endoplasmic reticulum membrane. Its function is as follows. Component of the ERMES/MDM complex, which serves as a molecular tether to connect the endoplasmic reticulum (ER) and mitochondria. Components of this complex are involved in the control of mitochondrial shape and protein biogenesis, and function in nonvesicular lipid trafficking between the ER and mitochondria. MDM12 is required for the interaction of the ER-resident membrane protein MMM1 and the outer mitochondrial membrane-resident beta-barrel protein MDM10. The MDM12-MMM1 subcomplex functions in the major beta-barrel assembly pathway that is responsible for biogenesis of all mitochondrial outer membrane beta-barrel proteins, and acts in a late step after the SAM complex. The MDM10-MDM12-MMM1 subcomplex further acts in the TOM40-specific pathway after the action of the MDM12-MMM1 complex. Essential for establishing and maintaining the structure of mitochondria and maintenance of mtDNA nucleoids. The polypeptide is Mitochondrial distribution and morphology protein 12 (Ajellomyces capsulatus (strain NAm1 / WU24) (Darling's disease fungus)).